A 418-amino-acid polypeptide reads, in one-letter code: Serine--tRNA ligase (418 aa).

Residue 227–229 (TSE) participates in L-serine binding. Residues 258 to 260 (RRE) and valine 274 contribute to the ATP site. Residue glutamate 281 participates in L-serine binding. 345 to 348 (ELTS) contributes to the ATP binding site. Threonine 380 contacts L-serine.

This sequence belongs to the class-II aminoacyl-tRNA synthetase family. Type-1 seryl-tRNA synthetase subfamily. In terms of assembly, homodimer. The tRNA molecule binds across the dimer.

It is found in the cytoplasm. The catalysed reaction is tRNA(Ser) + L-serine + ATP = L-seryl-tRNA(Ser) + AMP + diphosphate + H(+). It carries out the reaction tRNA(Sec) + L-serine + ATP = L-seryl-tRNA(Sec) + AMP + diphosphate + H(+). Its pathway is aminoacyl-tRNA biosynthesis; selenocysteinyl-tRNA(Sec) biosynthesis; L-seryl-tRNA(Sec) from L-serine and tRNA(Sec): step 1/1. In terms of biological role, catalyzes the attachment of serine to tRNA(Ser). Is also able to aminoacylate tRNA(Sec) with serine, to form the misacylated tRNA L-seryl-tRNA(Sec), which will be further converted into selenocysteinyl-tRNA(Sec). The polypeptide is Serine--tRNA ligase (Rhodococcus jostii (strain RHA1)).